We begin with the raw amino-acid sequence, 265 residues long: F-box only protein 6 (265 aa).

The 48-residue stretch at 3–50 (LVSINQLPENILLEVFMHVPARQLLRNCRPVCCLWRDLIDLVSLWKRK) folds into the F-box domain. The region spanning 71–252 (FYFLCSLRRN…VTNSSVVISH (182 aa)) is the FBA domain. At serine 251 the chain carries Phosphoserine.

Part of a SCF (SKP1-cullin-F-box) protein ligase complex. Interacts with VCP, CHEK1 and CUL1.

Its subcellular location is the cytoplasm. The protein operates within protein modification; protein ubiquitination. Its function is as follows. Substrate-recognition component of some SCF (SKP1-CUL1-F-box protein)-type E3 ubiquitin ligase complexes. Involved in endoplasmic reticulum-associated degradation pathway (ERAD) for misfolded lumenal proteins by recognizing and binding sugar chains on unfolded glycoproteins that are retrotranslocated into the cytosol and promoting their ubiquitination and subsequent degradation. Able to recognize and bind denatured glycoproteins, which are modified with not only high-mannose but also complex-type oligosaccharides. Also recognizes sulfated glycans. Also involved in DNA damage response by specifically recognizing activated CHEK1 (phosphorylated on 'Ser-345'), promoting its ubiquitination and degradation. Ubiquitination of CHEK1 is required to ensure that activated CHEK1 does not accumulate as cells progress through S phase, or when replication forks encounter transient impediments during normal DNA replication. The sequence is that of F-box only protein 6 (FBXO6) from Bos taurus (Bovine).